We begin with the raw amino-acid sequence, 718 residues long: DNA ligase (718 aa).

Residues 44–48 (DADYD), 93–94 (SL), and E127 contribute to the NAD(+) site. K129 (N6-AMP-lysine intermediate) is an active-site residue. 4 residues coordinate NAD(+): R150, E186, K302, and K326. C432, C435, C456, and C462 together coordinate Zn(2+). A BRCT domain is found at 640 to 718 (TAGSPVAGKT…EDEWLALISG (79 aa)).

The protein belongs to the NAD-dependent DNA ligase family. LigA subfamily. Requires Mg(2+) as cofactor. Mn(2+) is required as a cofactor.

The catalysed reaction is NAD(+) + (deoxyribonucleotide)n-3'-hydroxyl + 5'-phospho-(deoxyribonucleotide)m = (deoxyribonucleotide)n+m + AMP + beta-nicotinamide D-nucleotide.. Its function is as follows. DNA ligase that catalyzes the formation of phosphodiester linkages between 5'-phosphoryl and 3'-hydroxyl groups in double-stranded DNA using NAD as a coenzyme and as the energy source for the reaction. It is essential for DNA replication and repair of damaged DNA. This Rhizobium etli (strain CIAT 652) protein is DNA ligase.